Consider the following 44-residue polypeptide: U17-ctenitoxin-Co1a (44 aa).

4 cysteine pairs are disulfide-bonded: Cys-3-Cys-20, Cys-10-Cys-26, Cys-19-Cys-40, and Cys-28-Cys-38.

As to expression, expressed by the venom gland.

The protein resides in the secreted. Its function is as follows. Omega-agatoxins are antagonists of voltage-sensitive calcium channels (Cav). Toxic to mice by intracerebroventricular injection. The polypeptide is U17-ctenitoxin-Co1a (Ctenus ornatus (Brazilian spider)).